The primary structure comprises 482 residues: MSGVIYYKFKSQKDPSRITFDGTIGMSVFDVKREIIMQKKLGNGLDFDLLLYNANSNEEYDDDTFIIPRSTSVIVRRVPAQKSGKGTAARYVSGAPKTTGARSDSVKRPVPMLQKKAPITSGESNINKSPSSSEDAAIQQMFQVSSDQWRETQDKMASATPIYKPNQRRIAASVPDKPPPPGYICYRCGQKGHWIQACPTNADPNYDGKPRVKRTTGIPRSFLKNVERPAEGDAANIMINAEGDYVVVQPDVASWETYQSRKAALTANDVYKMQPPNISLACTLCKKLARNACRTPCCDKLFCEECIQTALLDSDFECPNCHRKDVLLDTLNPDYQKQREIEAVVKSVLGSNSKNSDKVGTSDDNNTPMSEKRKREDDDANGPNKFAARSSAVFSKATAEPAFKSAMAIPDMPSMPHVQGFPAPFPPFMMPGLPQMPPMMMNAIAGQVYHNNRNPPRTNSRPSNASVPPPSSLHKNPPTKTN.

The DWNN domain maps to 5–79; it reads IYYKFKSQKD…STSVIVRRVP (75 aa). The interval 86–108 is disordered; the sequence is GTAARYVSGAPKTTGARSDSVKR. The CCHC-type zinc finger occupies 183–200; sequence YICYRCGQKGHWIQACPT. An RING-type; degenerate zinc finger spans residues 282–322; sequence CTLCKKLARNACRTPCCDKLFCEECIQTALLDSDFECPNCH. Disordered stretches follow at residues 346–393 and 447–482; these read KSVL…SSAV and QVYH…TKTN. Residues 451 to 466 are compositionally biased toward low complexity; that stretch reads NNRNPPRTNSRPSNAS.

It localises to the nucleus. This is an uncharacterized protein from Schizosaccharomyces pombe (strain 972 / ATCC 24843) (Fission yeast).